The sequence spans 318 residues: cAMP/cGMP dual specificity phosphodiesterase MT0825 (318 aa).

The Fe cation site is built by aspartate 21, histidine 23, and aspartate 63. Residues histidine 23, aspartate 63, and 97 to 98 (NH) each bind AMP. Residues aspartate 63, asparagine 97, histidine 169, and histidine 207 each coordinate Mn(2+). Position 209 (histidine 209) interacts with Fe cation. An AMP-binding site is contributed by histidine 209. Residues 278-318 (PGQARRKIAESGIFIEPSRRDSLFKHPPMVLTSSAPRSPVD) form a C-terminal extension region.

The protein belongs to the cyclic nucleotide phosphodiesterase class-III family. As to quaternary structure, homodimer. It depends on Fe(3+) as a cofactor. Mn(2+) is required as a cofactor.

The protein localises to the cytoplasm. The protein resides in the cell membrane. Its subcellular location is the secreted. It is found in the cell wall. It localises to the cell envelope. It catalyses the reaction a nucleoside 2',3'-cyclic phosphate + H2O = a nucleoside 3'-phosphate + H(+). It carries out the reaction 2',3'-cyclophospho-AMP + H2O = 3'-AMP + H(+). The catalysed reaction is 2',3'-cyclophospho-GMP + H2O = 3'-GMP + H(+). The enzyme catalyses a nucleoside 3',5'-cyclic phosphate + H2O = a nucleoside 5'-phosphate + H(+). It catalyses the reaction 3',5'-cyclic AMP + H2O = AMP + H(+). It carries out the reaction 3',5'-cyclic GMP + H2O = GMP + H(+). Functionally, cyclic nucleotide phosphodiesterase with a dual-specificity for the second messengers cAMP and cGMP. This chain is cAMP/cGMP dual specificity phosphodiesterase MT0825, found in Mycobacterium tuberculosis (strain CDC 1551 / Oshkosh).